Consider the following 530-residue polypeptide: Tryptophan 7-halogenase RebH (530 aa).

Residues Gly13, Thr15, Ala16, Ala39, Asp41, Glu49, and Ala50 each contribute to the FAD site. Lys79 is a catalytic residue. Val197 and Thr348 together coordinate FAD. L-tryptophan is bound at residue Glu357. Residues Thr359 and Gly360 each coordinate chloride. Ile361 contacts FAD. L-tryptophan is bound by residues Tyr454, Tyr455, Glu461, and Phe465.

This sequence belongs to the flavin-dependent halogenase family. Bacterial tryptophan halogenase subfamily. As to quaternary structure, homodimer.

The enzyme catalyses L-tryptophan + FADH2 + chloride + O2 = 7-chloro-L-tryptophan + FAD + 2 H2O. In terms of biological role, involved in the biosynthesis of the indolocarbazole antitumor agent rebeccamycin. Catalyzes the chlorination of tryptophan (Trp) at C7 position to yield 7-chlorotryptophan. It is also able to use bromide ions to generate monobrominated Trp. This chain is Tryptophan 7-halogenase RebH (rebH), found in Lentzea aerocolonigenes (Lechevalieria aerocolonigenes).